The chain runs to 310 residues: Vomeronasal type-1 receptor 3 (310 aa).

The Extracellular portion of the chain corresponds to 1 to 5; that stretch reads MASKD. A helical membrane pass occupies residues 6 to 26; the sequence is FAIGMILSQIMVGFLGNFFLL. The Cytoplasmic segment spans residues 27–50; sequence YHYSFLHFTRGMLQSTDLTLKHLT. A helical transmembrane segment spans residues 51–71; the sequence is IANSLVILSKGIPQTMAAFGL. Residues 72-91 are Extracellular-facing; it reads KDSLSDIGCKFVFYVHRVGR. A helical transmembrane segment spans residues 92–112; sequence AVCTGNACLLSVFQVITISSS. Over 113 to 129 the chain is Cytoplasmic; that stretch reads EFRWAELKLHAHKYIRS. The helical transmembrane segment at 130–150 threads the bilayer; it reads FILVLCWILNTLVNITVPLHV. The Extracellular portion of the chain corresponds to 151 to 186; the sequence is TGKWNSINSTKTNDYGYCSGGSRSRIPHSLHIVLLS. The N-linked (GlcNAc...) asparagine glycan is linked to N158. Residues 187-207 traverse the membrane as a helical segment; it reads SLDVLCLGLMTLASGSMVFIL. Topologically, residues 208-235 are cytoplasmic; it reads HRLKQQVQHIHGTNLSPRSSPESRVTQS. The chain crosses the membrane as a helical span at residues 236-258; that stretch reads ILVLVSTLCYFTRSPPSLHMSLF. Residues 259–263 are Extracellular-facing; sequence PNPSW. The helical transmembrane segment at 264 to 284 threads the bilayer; the sequence is WPLNASALITACFPTVSPFVL. The Cytoplasmic segment spans residues 285–310; sequence MSRHPRIPRLGSACCGRNPQFPKLVR.

This sequence belongs to the G-protein coupled receptor 1 family.

Its subcellular location is the cell membrane. In terms of biological role, putative pheromone receptor. This chain is Vomeronasal type-1 receptor 3 (VN1R3), found in Pan troglodytes (Chimpanzee).